The primary structure comprises 264 residues: 3-methyl-2-oxobutanoate hydroxymethyltransferase 1 (264 aa).

2 residues coordinate Mg(2+): Asp45 and Asp84. 3-methyl-2-oxobutanoate is bound by residues 45 to 46 (DS), Asp84, and Lys112. Residue Glu114 coordinates Mg(2+). The active-site Proton acceptor is the Glu181.

It belongs to the PanB family. In terms of assembly, homodecamer; pentamer of dimers. Mg(2+) serves as cofactor.

It localises to the cytoplasm. The enzyme catalyses 3-methyl-2-oxobutanoate + (6R)-5,10-methylene-5,6,7,8-tetrahydrofolate + H2O = 2-dehydropantoate + (6S)-5,6,7,8-tetrahydrofolate. Its pathway is cofactor biosynthesis; (R)-pantothenate biosynthesis; (R)-pantoate from 3-methyl-2-oxobutanoate: step 1/2. In terms of biological role, catalyzes the reversible reaction in which hydroxymethyl group from 5,10-methylenetetrahydrofolate is transferred onto alpha-ketoisovalerate to form ketopantoate. The sequence is that of 3-methyl-2-oxobutanoate hydroxymethyltransferase 1 from Aliivibrio fischeri (strain ATCC 700601 / ES114) (Vibrio fischeri).